Reading from the N-terminus, the 264-residue chain is MADCAAPVGVFDSGVGGLSVLREIRQRLPHESLLYLADSAHVPYGEKSPEYIRERCRVIAAFFVEKGAKALVVACNTATAAGVTELRELYPQLPIIAMEPAVKPAALATRSGVVGVLATTGTLKSAKFAALLDRFAADVRVITQPCPGLVERIEAGDLESADTRAMLMGWVEPMLAQGCDTLILGCTHYPFIRPLLQQLLPNDIRLIDTGAAVARHLREMLAERHLLASGDATQRFYCSGDPQRMARVLPILWGENAVVEFFPS.

Substrate-binding positions include 12–13 (DS) and 44–45 (YG). Cysteine 75 acts as the Proton donor/acceptor in catalysis. 76–77 (NT) serves as a coordination point for substrate. Cysteine 186 (proton donor/acceptor) is an active-site residue. Position 187 to 188 (187 to 188 (TH)) interacts with substrate.

It belongs to the aspartate/glutamate racemases family.

The enzyme catalyses L-glutamate = D-glutamate. It participates in cell wall biogenesis; peptidoglycan biosynthesis. Provides the (R)-glutamate required for cell wall biosynthesis. The chain is Glutamate racemase from Stutzerimonas stutzeri (strain A1501) (Pseudomonas stutzeri).